We begin with the raw amino-acid sequence, 609 residues long: Indole-3-acetic acid-amido synthetase GH3.17 (609 aa).

Belongs to the IAA-amido conjugating enzyme family.

Catalyzes the synthesis of indole-3-acetic acid (IAA)-amino acid conjugates, providing a mechanism for the plant to cope with the presence of excess auxin. Strongly reactive with Glu, Gln, Trp, Asp, Ala, Leu, Phe, Gly, Tyr, Met, Ile and Val. Appears to favor Glu over Asp while the other GH3 favor Asp over Glu. Little or no product formation with His, Ser, Thr, Arg, Lys, or Cys. Also active on pyruvic and butyric acid analogs of IAA, PAA and the synthetic auxin naphthaleneacetic acid (NAA). The two chlorinated synthetic auxin herbicides 2,4-D and 3,6-dichloro-o-anisic acid (dicamba) cannot be used as substrates. The chain is Indole-3-acetic acid-amido synthetase GH3.17 (GH3.17) from Arabidopsis thaliana (Mouse-ear cress).